Reading from the N-terminus, the 215-residue chain is Histidine biosynthesis bifunctional protein HisIE (215 aa).

The segment at 1–118 (MTKSISIEHL…YKNDVALLQI (118 aa)) is phosphoribosyl-AMP cyclohydrolase. Positions 119-215 (IPQVSAKIKE…HVEKEGQQRE (97 aa)) are phosphoribosyl-ATP pyrophosphohydrolase.

In the N-terminal section; belongs to the PRA-CH family. The protein in the C-terminal section; belongs to the PRA-PH family.

It is found in the cytoplasm. It carries out the reaction 1-(5-phospho-beta-D-ribosyl)-ATP + H2O = 1-(5-phospho-beta-D-ribosyl)-5'-AMP + diphosphate + H(+). The enzyme catalyses 1-(5-phospho-beta-D-ribosyl)-5'-AMP + H2O = 1-(5-phospho-beta-D-ribosyl)-5-[(5-phospho-beta-D-ribosylamino)methylideneamino]imidazole-4-carboxamide. It functions in the pathway amino-acid biosynthesis; L-histidine biosynthesis; L-histidine from 5-phospho-alpha-D-ribose 1-diphosphate: step 2/9. Its pathway is amino-acid biosynthesis; L-histidine biosynthesis; L-histidine from 5-phospho-alpha-D-ribose 1-diphosphate: step 3/9. In Oceanobacillus iheyensis (strain DSM 14371 / CIP 107618 / JCM 11309 / KCTC 3954 / HTE831), this protein is Histidine biosynthesis bifunctional protein HisIE.